A 156-amino-acid chain; its full sequence is 6,7-dimethyl-8-ribityllumazine synthase (156 aa).

Residues F23, 57 to 59 (AYE), and 81 to 83 (AII) contribute to the 5-amino-6-(D-ribitylamino)uracil site. 86–87 (GT) is a binding site for (2S)-2-hydroxy-3-oxobutyl phosphate. The Proton donor role is filled by H89. F114 provides a ligand contact to 5-amino-6-(D-ribitylamino)uracil. Residue R128 participates in (2S)-2-hydroxy-3-oxobutyl phosphate binding.

Belongs to the DMRL synthase family.

The catalysed reaction is (2S)-2-hydroxy-3-oxobutyl phosphate + 5-amino-6-(D-ribitylamino)uracil = 6,7-dimethyl-8-(1-D-ribityl)lumazine + phosphate + 2 H2O + H(+). It functions in the pathway cofactor biosynthesis; riboflavin biosynthesis; riboflavin from 2-hydroxy-3-oxobutyl phosphate and 5-amino-6-(D-ribitylamino)uracil: step 1/2. Its function is as follows. Catalyzes the formation of 6,7-dimethyl-8-ribityllumazine by condensation of 5-amino-6-(D-ribitylamino)uracil with 3,4-dihydroxy-2-butanone 4-phosphate. This is the penultimate step in the biosynthesis of riboflavin. The sequence is that of 6,7-dimethyl-8-ribityllumazine synthase from Helicobacter pylori (strain G27).